A 78-amino-acid polypeptide reads, in one-letter code: Large ribosomal subunit protein bL28 (78 aa).

It belongs to the bacterial ribosomal protein bL28 family.

The polypeptide is Large ribosomal subunit protein bL28 (Clavibacter michiganensis subsp. michiganensis (strain NCPPB 382)).